A 299-amino-acid chain; its full sequence is Serine/threonine-protein kinase 1 (299 aa).

Residues 39–277 (IATKPMFEGG…FKGLVSHPWF (239 aa)) form the Protein kinase domain. ATP-binding positions include 45–53 (FEGGRRNNV) and Lys-66. Asp-153 serves as the catalytic Proton acceptor.

It belongs to the protein kinase superfamily. Ser/Thr protein kinase family.

Its subcellular location is the virion. The protein resides in the host cytoplasm. It carries out the reaction L-seryl-[protein] + ATP = O-phospho-L-seryl-[protein] + ADP + H(+). The catalysed reaction is L-threonyl-[protein] + ATP = O-phospho-L-threonyl-[protein] + ADP + H(+). Functionally, essential for viral replication. It may mediate the virus progression through DNA replication. The protein is Serine/threonine-protein kinase 1 of African swine fever virus (isolate Tick/Malawi/Lil 20-1/1983) (ASFV).